Here is a 495-residue protein sequence, read N- to C-terminus: Bile acid-sensitive ion channel (495 aa).

Residues 1–30 (MEHTEKSKGPAEKGLLGKIRRYLSKRPLPS) form a binds the plasma membrane and stabilizes the channel in the closed state region. Topologically, residues 1–61 (MEHTEKSKGP…NIAQNQNKVR (61 aa)) are cytoplasmic. The helical transmembrane segment at 62-82 (KVIWLSVVLGSVSLLVWQIYS) threads the bilayer. Residues 83-459 (RLVNYFMWPT…GLFCGASLIT (377 aa)) are Extracellular-facing. Cystine bridges form between Cys-112/Cys-207, Cys-185/Cys-192, Cys-298/Cys-377, Cys-315/Cys-373, Cys-328/Cys-350, and Cys-330/Cys-342. N-linked (GlcNAc...) asparagine glycosylation is found at Asn-147 and Asn-163. N-linked (GlcNAc...) asparagine glycosylation is present at Asn-306. Asn-370, Asn-405, and Asn-421 each carry an N-linked (GlcNAc...) asparagine glycan. Positions 454–456 (GAS) match the GAS motif; ion selectivity filter motif. Residues 460–480 (IIEIIEYLFTSFYWVFIFFLL) traverse the membrane as a helical segment. Residues 481 to 495 (KILEMIQRTSPPQTV) lie on the Cytoplasmic side of the membrane.

It belongs to the amiloride-sensitive sodium channel (TC 1.A.6) family. ASIC5 subfamily. As to quaternary structure, forms homotrimeric channels. Expressed by cholangiocytes (at protein level). Detected in brain, liver, duodenum, jejunum, ileum and testis.

It is found in the apical cell membrane. Its subcellular location is the cell membrane. It carries out the reaction Na(+)(in) = Na(+)(out). The catalysed reaction is Li(+)(in) = Li(+)(out). It catalyses the reaction K(+)(in) = K(+)(out). The enzyme catalyses H(+)(in) = H(+)(out). Inhibited by the diuretic drug amiloride. Inhibited by diminazene. Inhibited by extracellular Ca(2+). Forms bile acid-gated sodium channels and may play a role in bile acid-dependent absorption and secretion by epithelial cells of the bile ducts. Displays high selectivity for sodium ions but can also permit the permeation of other cations. The gating could be indirect and the consequence of alterations of the membrane environment of the channel by bile acids. As a sodium channel of type II unipolar brush cells of the vestibulocerebellum, controlling the electrical activity of these cells, could play a role in motor coordination and balance. The sequence is that of Bile acid-sensitive ion channel from Rattus norvegicus (Rat).